The primary structure comprises 556 residues: Formate--tetrahydrofolate ligase (556 aa).

65–72 (TPAGEGKT) contacts ATP.

Belongs to the formate--tetrahydrofolate ligase family.

It carries out the reaction (6S)-5,6,7,8-tetrahydrofolate + formate + ATP = (6R)-10-formyltetrahydrofolate + ADP + phosphate. Its pathway is one-carbon metabolism; tetrahydrofolate interconversion. This Maricaulis maris (strain MCS10) (Caulobacter maris) protein is Formate--tetrahydrofolate ligase.